The chain runs to 237 residues: 2,3,4,5-tetrahydropyridine-2,6-dicarboxylate N-acetyltransferase (237 aa).

This sequence belongs to the transferase hexapeptide repeat family. DapH subfamily.

The catalysed reaction is (S)-2,3,4,5-tetrahydrodipicolinate + acetyl-CoA + H2O = L-2-acetamido-6-oxoheptanedioate + CoA. The protein operates within amino-acid biosynthesis; L-lysine biosynthesis via DAP pathway; LL-2,6-diaminopimelate from (S)-tetrahydrodipicolinate (acetylase route): step 1/3. Functionally, catalyzes the transfer of an acetyl group from acetyl-CoA to tetrahydrodipicolinate. The chain is 2,3,4,5-tetrahydropyridine-2,6-dicarboxylate N-acetyltransferase from Alkaliphilus metalliredigens (strain QYMF).